The chain runs to 123 residues: Phospholipase A2 (123 aa).

Intrachain disulfides connect C11/C77, C27/C123, C29/C45, C44/C105, C51/C98, C61/C91, and C84/C96. Y28, G30, and G32 together coordinate Ca(2+). H48 is a catalytic residue. Ca(2+) is bound at residue D49. The active site involves D99.

The protein belongs to the phospholipase A2 family. In terms of assembly, monomer or homodimer. It depends on Ca(2+) as a cofactor. Activated by trypsin cleavage in the duodenum. Can also be activated by thrombin or autocatalytically.

It is found in the secreted. It carries out the reaction a 1,2-diacyl-sn-glycero-3-phosphocholine + H2O = a 1-acyl-sn-glycero-3-phosphocholine + a fatty acid + H(+). It catalyses the reaction 1,2-ditetradecanoyl-sn-glycero-3-phosphocholine + H2O = 1-tetradecanoyl-sn-glycero-3-phosphocholine + tetradecanoate + H(+). The catalysed reaction is 1,2-dihexadecanoyl-sn-glycero-3-phosphocholine + H2O = 1-hexadecanoyl-sn-glycero-3-phosphocholine + hexadecanoate + H(+). The enzyme catalyses 1-hexadecanoyl-2-(9Z-octadecenoyl)-sn-glycero-3-phosphocholine + H2O = 1-hexadecanoyl-sn-glycero-3-phosphocholine + (9Z)-octadecenoate + H(+). It carries out the reaction 1-hexadecanoyl-2-(5Z,8Z,11Z,14Z-eicosatetraenoyl)-sn-glycero-3-phosphocholine + H2O = 1-hexadecanoyl-sn-glycero-3-phosphocholine + (5Z,8Z,11Z,14Z)-eicosatetraenoate + H(+). It catalyses the reaction 1-hexadecanoyl-2-(9Z-octadecenoyl)-sn-glycero-3-phospho-(1'-sn-glycerol) + H2O = 1-hexadecanoyl-sn-glycero-3-phospho-(1'-sn-glycerol) + (9Z)-octadecenoate + H(+). The catalysed reaction is N-hexadecanoyl-1,2-di-(9Z-octadecenoyl)-sn-glycero-3-phosphoethanolamine + H2O = N-hexadecanoyl-1-(9Z-octadecenoyl)-sn-glycero-3-phosphoethanolamine + (9Z)-octadecenoate + H(+). The enzyme catalyses 1-hexadecanoyl-2-(9Z,12Z-octadecadienoyl)-sn-glycero-3-phosphoethanolamine + H2O = 1-hexadecanoyl-sn-glycero-3-phosphoethanolamine + (9Z,12Z)-octadecadienoate + H(+). It carries out the reaction N,1-dihexadecanoyl-2-(9Z,12Z-octadecadienoyl)-sn-glycero-3-phosphoethanolamine + H2O = N,1-dihexadecanoyl-sn-glycero-3-phosphoethanolamine + (9Z,12Z)-octadecadienoate + H(+). Functionally, secretory calcium-dependent phospholipase A2 that primarily targets dietary phospholipids in the intestinal tract. Hydrolyzes the ester bond of the fatty acyl group attached at sn-2 position of phospholipids (phospholipase A2 activity) with preference for phosphatidylethanolamines and phosphatidylglycerols over phosphatidylcholines. May play a role in the biosynthesis of N-acyl ethanolamines that regulate energy metabolism and inflammation in the intestinal tract. Hydrolyzes N-acyl phosphatidylethanolamines to N-acyl lysophosphatidylethanolamines, which are further cleaved by a lysophospholipase D to release N-acyl ethanolamines. May act in an autocrine and paracrine manner. Has anti-helminth activity in a process regulated by gut microbiota. Upon helminth infection of intestinal epithelia, directly affects phosphatidylethanolamine contents in the membrane of helminth larvae, likely controlling an array of phospholipid-mediated cellular processes such as membrane fusion and cell division while providing for better immune recognition, ultimately reducing larvae integrity and infectivity. The protein is Phospholipase A2 (PLA2G1B) of Ovis aries (Sheep).